We begin with the raw amino-acid sequence, 933 residues long: Isoleucine--tRNA ligase (933 aa).

A 'HIGH' region motif is present at residues 57 to 67 (PYANGNIHVGH). Residue Glu-554 participates in L-isoleucyl-5'-AMP binding. The 'KMSKS' region motif lies at 595–599 (KMSKS). Lys-598 is a binding site for ATP.

Belongs to the class-I aminoacyl-tRNA synthetase family. IleS type 1 subfamily. In terms of assembly, monomer.

It localises to the cytoplasm. The enzyme catalyses tRNA(Ile) + L-isoleucine + ATP = L-isoleucyl-tRNA(Ile) + AMP + diphosphate. Its function is as follows. Catalyzes the attachment of isoleucine to tRNA(Ile). As IleRS can inadvertently accommodate and process structurally similar amino acids such as valine, to avoid such errors it has two additional distinct tRNA(Ile)-dependent editing activities. One activity is designated as 'pretransfer' editing and involves the hydrolysis of activated Val-AMP. The other activity is designated 'posttransfer' editing and involves deacylation of mischarged Val-tRNA(Ile). The chain is Isoleucine--tRNA ligase from Streptococcus pyogenes serotype M18 (strain MGAS8232).